We begin with the raw amino-acid sequence, 211 residues long: Probable septum site-determining protein MinC (211 aa).

Belongs to the MinC family. As to quaternary structure, interacts with MinD and FtsZ.

Cell division inhibitor that blocks the formation of polar Z ring septums. Rapidly oscillates between the poles of the cell to destabilize FtsZ filaments that have formed before they mature into polar Z rings. Prevents FtsZ polymerization. In Clostridium acetobutylicum (strain ATCC 824 / DSM 792 / JCM 1419 / IAM 19013 / LMG 5710 / NBRC 13948 / NRRL B-527 / VKM B-1787 / 2291 / W), this protein is Probable septum site-determining protein MinC.